Consider the following 396-residue polypeptide: S-adenosylmethionine synthase (396 aa).

His-15 contacts ATP. Asp-17 serves as a coordination point for Mg(2+). Glu-43 provides a ligand contact to K(+). Residues Glu-56 and Gln-99 each coordinate L-methionine. Residues 99–109 form a flexible loop region; sequence QSSDIAQGVDR. Residues 175–177, 241–242, Asp-250, 256–257, Ser-273, and Lys-277 contribute to the ATP site; these read DGK, RF, and RK. L-methionine is bound at residue Asp-250. Residue Lys-281 coordinates L-methionine.

This sequence belongs to the AdoMet synthase family. Homotetramer; dimer of dimers. It depends on Mg(2+) as a cofactor. Requires K(+) as cofactor.

It is found in the cytoplasm. It carries out the reaction L-methionine + ATP + H2O = S-adenosyl-L-methionine + phosphate + diphosphate. It participates in amino-acid biosynthesis; S-adenosyl-L-methionine biosynthesis; S-adenosyl-L-methionine from L-methionine: step 1/1. In terms of biological role, catalyzes the formation of S-adenosylmethionine (AdoMet) from methionine and ATP. The overall synthetic reaction is composed of two sequential steps, AdoMet formation and the subsequent tripolyphosphate hydrolysis which occurs prior to release of AdoMet from the enzyme. The protein is S-adenosylmethionine synthase of Pelotomaculum thermopropionicum (strain DSM 13744 / JCM 10971 / SI).